We begin with the raw amino-acid sequence, 1173 residues long: TBC1 domain family member 5 homolog A (1173 aa).

Disordered stretches follow at residues Lys22–Glu203, Asn217–Asn324, Asp425–Ser446, and Ile823–Gly872. Low complexity-rich tracts occupy residues Ser26–Asn107, Asn127–Glu203, and Asn217–Tyr290. The stretch at Asn163–Tyr214 forms a coiled coil. Positions Gln299–Asp313 are enriched in basic and acidic residues. Over residues Ser314–Asn324 the composition is skewed to polar residues. The Rab-GAP TBC domain occupies Pro374–Ser729. Residues Gln431–Gln441 are compositionally biased toward low complexity. Positions Thr885–Val930 form a coiled coil. Residues Asn983–Val994 are compositionally biased toward polar residues. Disordered stretches follow at residues Asn983–Ser1015 and Gln1054–Asn1089. 2 stretches are compositionally biased toward low complexity: residues Gln995–Ser1015 and Gln1054–Gln1078. The segment covering Asn1079–Asn1089 has biased composition (polar residues).

Its function is as follows. May act as a GTPase-activating protein for Rab family protein(s). The polypeptide is TBC1 domain family member 5 homolog A (tbc1d5A) (Dictyostelium discoideum (Social amoeba)).